The chain runs to 178 residues: Protein FLOWERING LOCUS T 1 (178 aa).

It belongs to the phosphatidylethanolamine-binding protein family. Expressed in leaves but not in shoot apex.

In terms of biological role, involved in the regulation of vernalization and of flowering time. This Brachypodium distachyon (Purple false brome) protein is Protein FLOWERING LOCUS T 1.